The sequence spans 1499 residues: Tyrosine-protein phosphatase non-receptor type 23 (1499 aa).

A BRO1 domain is found at 1 to 219 (LNVNLMLGQA…AKIEDKNEVL (219 aa)). TPR repeat units follow at residues 75 to 108 (AVAHLHMGKQAEEQQKFGERVAYFQSALDKLNEA) and 199 to 232 (EEKAKLLREMLAKIEDKNEVLDQFMDSMQLDPDT). Coiled-coil stretches lie at residues 278 to 305 (EASLKDIRDLLEEDELQEQKLQETLGQA), 377 to 464 (KAVL…NVQY), and 506 to 537 (YADLESKVAALLERAQSLCRAQEAARQQLLDR). Disordered regions lie at residues 536-583 (DREL…MMAG) and 718-1006 (HMAL…LLQP). The tract at residues 598-993 (HFSPGPFPGS…SSSPESQHGG (396 aa)) is his. The span at 724–752 (GPAPAPPQPCFPVPQPVPQSVPQPQPLPT) shows a compositional bias: pro residues. Positions 754–763 (YTYSIGTKQH) are enriched in polar residues. R785 is subject to Omega-N-methylarginine. Pro residues-rich tracts occupy residues 785-827 (RIGP…PQPQ), 856-866 (LTPPPPYPFTP), 900-909 (FPSPGPPHPH), and 934-972 (GPPPANQPAPSPHLVPSPAPSPGPGPVPSRPPTAEPPPC). Repeat copies occupy residues 788–789 (PQ), 790–791 (PP), 792–793 (PQ), 794–795 (LQ), 796–797 (PQ), 798–799 (PQ), 800–801 (PQ), 802–803 (PQ), 804–805 (PQ), 806–807 (PP), 808–809 (PQ), 810–811 (PQ), 812–813 (PQ), 814–815 (PQ), 816–817 (PQ), 818–819 (PQ), 820–821 (PQ), 822–823 (PQ), 824–825 (PQ), and 826–827 (PQ). Residues 788-827 (PQPPPQLQPQPQPQPQPQPPPQPQPQPQPQPQPQPQPQPQ) are 20 X 2 AA approximate tandem repeats of P-Q. S985 and S986 each carry phosphoserine. T994 is subject to Phosphothreonine. A Tyrosine-protein phosphatase domain is found at 1055-1315 (DAVWRELQEA…KFCHEALVRH (261 aa)). Residue C1255 is the Phosphocysteine intermediate of the active site. 2 disordered regions span residues 1322-1351 (RHGVPPPGKPVASMSVSQKSHLPQDSQDLV) and 1381-1499 (ASLP…LNKT). Polar residues predominate over residues 1335–1348 (MSVSQKSHLPQDSQ). The segment covering 1390 to 1419 (PGLPPASLPEPTPAPPSSPPPPSSPLPEPP) has biased composition (pro residues). Positions 1427–1450 (VPEAPSLGPPSSSLELLASLTPEA) are enriched in low complexity. Residues 1464–1473 (SKQNFLQAHN) are compositionally biased toward polar residues. At R1478 the chain carries Omega-N-methylarginine. Positions 1482-1499 (PTDDPLSLLDPLWTLNKT) are enriched in low complexity.

This sequence belongs to the protein-tyrosine phosphatase family. Non-receptor class subfamily. Interacts with GRAP2 and GRB2. Interacts with UBAP1 and CHMP4B. In terms of tissue distribution, ubiquitously expressed, with highest levels in brain, testis and kidney, and lowest levels in skeletal muscle.

It localises to the nucleus. Its subcellular location is the cytoplasm. The protein resides in the cytoplasmic vesicle. It is found in the endosome. The protein localises to the cytoskeleton. It localises to the cilium basal body. The enzyme catalyses O-phospho-L-tyrosyl-[protein] + H2O = L-tyrosyl-[protein] + phosphate. In terms of biological role, plays a role in sorting of endocytic ubiquitinated cargos into multivesicular bodies (MVBs) via its interaction with the ESCRT-I complex (endosomal sorting complex required for transport I), and possibly also other ESCRT complexes. May act as a negative regulator of Ras-mediated mitogenic activity. Plays a role in ciliogenesis. In Rattus norvegicus (Rat), this protein is Tyrosine-protein phosphatase non-receptor type 23 (Ptpn23).